A 317-amino-acid chain; its full sequence is Transaldolase (317 aa).

Residue K132 is the Schiff-base intermediate with substrate of the active site.

This sequence belongs to the transaldolase family. Type 1 subfamily. Homodimer.

Its subcellular location is the cytoplasm. The catalysed reaction is D-sedoheptulose 7-phosphate + D-glyceraldehyde 3-phosphate = D-erythrose 4-phosphate + beta-D-fructose 6-phosphate. The protein operates within carbohydrate degradation; pentose phosphate pathway; D-glyceraldehyde 3-phosphate and beta-D-fructose 6-phosphate from D-ribose 5-phosphate and D-xylulose 5-phosphate (non-oxidative stage): step 2/3. Functionally, transaldolase is important for the balance of metabolites in the pentose-phosphate pathway. The polypeptide is Transaldolase (Haemophilus influenzae (strain 86-028NP)).